The sequence spans 424 residues: MGCGTSKVLPEPPKDVQLDLVKKVEPFSGTKSDVYKHFITEVDSVGPVKAGFPAASQYAHPCPGPPTAGHTEPPSEPPRRARVAKYRAKFDPRVTAKYDIKALIGRGSFSRVVRVEHRATRQPYAIKMIETKYREGREVCESELRVLRRVRHANIIQLVEVFETQERVYMVMELATGGELFDRIIAKGSFTERDATRVLQMVLDGVRYLHALGITHRDLKPENLLYYHPGTDSKIIITDFGLASARKKGDDCLMKTTCGTPEYIAPEVLVRKPYTNSVDMWALGVIAYILLSGTMPFEDDNRTRLYRQILRGKYSYSGEPWPSVSNLAKDFIDRLLTVDPGARMTALQALRHPWVVSMAASSSMKNLHRSISQNLLKRASSRCQSTKSAQSTRSSRSTRSNKSRRVRERELRELNLRYQQQYNG.

Gly2 carries the N-myristoyl glycine lipid modification. Cys3 is lipidated: S-palmitoyl cysteine. The tract at residues 56 to 80 (SQYAHPCPGPPTAGHTEPPSEPPRR) is disordered. The Protein kinase domain occupies 98–355 (YDIKALIGRG…ALQALRHPWV (258 aa)). ATP contacts are provided by residues 104 to 112 (IGRGSFSRV) and Lys127. Asp218 (proton acceptor) is an active-site residue. The tract at residues 378 to 407 (RASSRCQSTKSAQSTRSSRSTRSNKSRRVR) is disordered. A phosphoserine; by autocatalysis mark is found at Ser380 and Ser381. Over residues 385-398 (STKSAQSTRSSRST) the composition is skewed to low complexity.

The protein belongs to the protein kinase superfamily. CAMK Ser/Thr protein kinase family. In terms of assembly, homodimer. Post-translationally, autophosphorylated on serine residues. Myristoylated. Required for membrane association. Prerequisite for palmitoylation to occur. In terms of processing, palmitoylated. Expressed in all tissues and cell lines tested with the highest level of abundance in testis.

The protein resides in the golgi apparatus. Its subcellular location is the cytoplasm. It is found in the cytoskeleton. The protein localises to the microtubule organizing center. It localises to the centrosome. The protein resides in the nucleus speckle. Its subcellular location is the endoplasmic reticulum membrane. It is found in the cell membrane. It carries out the reaction L-seryl-[protein] + ATP = O-phospho-L-seryl-[protein] + ADP + H(+). The catalysed reaction is L-threonyl-[protein] + ATP = O-phospho-L-threonyl-[protein] + ADP + H(+). With respect to regulation, activity depends on Ca(2+) concentration. Its function is as follows. Serine/threonine protein kinase that may be involved in the regulation of pre-mRNA processing. It may phosphorylate components of nuclear splice factor compartments (SFC), such as non-snRNP splicing factors containing a serine/arginine-rich domain (SR proteins). Reversible phosphorylation of SR proteins may cause their release into the nucleoplasm and change their local concentration, thereby influencing alternative splicing. The protein is Serine/threonine-protein kinase H1 (PSKH1) of Homo sapiens (Human).